We begin with the raw amino-acid sequence, 412 residues long: Serine hydroxymethyltransferase (412 aa).

(6S)-5,6,7,8-tetrahydrofolate contacts are provided by residues leucine 117 and 121–123 (GHL). Position 226 is an N6-(pyridoxal phosphate)lysine (lysine 226). 349 to 351 (SPF) serves as a coordination point for (6S)-5,6,7,8-tetrahydrofolate.

It belongs to the SHMT family. Homodimer. The cofactor is pyridoxal 5'-phosphate.

The protein resides in the cytoplasm. It catalyses the reaction (6R)-5,10-methylene-5,6,7,8-tetrahydrofolate + glycine + H2O = (6S)-5,6,7,8-tetrahydrofolate + L-serine. It functions in the pathway one-carbon metabolism; tetrahydrofolate interconversion. It participates in amino-acid biosynthesis; glycine biosynthesis; glycine from L-serine: step 1/1. Catalyzes the reversible interconversion of serine and glycine with tetrahydrofolate (THF) serving as the one-carbon carrier. This reaction serves as the major source of one-carbon groups required for the biosynthesis of purines, thymidylate, methionine, and other important biomolecules. Also exhibits THF-independent aldolase activity toward beta-hydroxyamino acids, producing glycine and aldehydes, via a retro-aldol mechanism. The polypeptide is Serine hydroxymethyltransferase (Nitratidesulfovibrio vulgaris (strain ATCC 29579 / DSM 644 / CCUG 34227 / NCIMB 8303 / VKM B-1760 / Hildenborough) (Desulfovibrio vulgaris)).